Reading from the N-terminus, the 398-residue chain is 1-deoxy-D-xylulose 5-phosphate reductoisomerase (398 aa).

NADPH contacts are provided by threonine 11, glycine 12, serine 13, isoleucine 14, arginine 38, asparagine 39, and asparagine 125. Lysine 126 serves as a coordination point for 1-deoxy-D-xylulose 5-phosphate. Glutamate 127 provides a ligand contact to NADPH. Aspartate 151 serves as a coordination point for Mn(2+). Serine 152, glutamate 153, serine 179, and histidine 202 together coordinate 1-deoxy-D-xylulose 5-phosphate. Glutamate 153 lines the Mn(2+) pocket. Glycine 208 lines the NADPH pocket. Serine 215, asparagine 220, lysine 221, and glutamate 224 together coordinate 1-deoxy-D-xylulose 5-phosphate. Glutamate 224 contributes to the Mn(2+) binding site.

This sequence belongs to the DXR family. It depends on Mg(2+) as a cofactor. Mn(2+) is required as a cofactor.

It carries out the reaction 2-C-methyl-D-erythritol 4-phosphate + NADP(+) = 1-deoxy-D-xylulose 5-phosphate + NADPH + H(+). Its pathway is isoprenoid biosynthesis; isopentenyl diphosphate biosynthesis via DXP pathway; isopentenyl diphosphate from 1-deoxy-D-xylulose 5-phosphate: step 1/6. Functionally, catalyzes the NADPH-dependent rearrangement and reduction of 1-deoxy-D-xylulose-5-phosphate (DXP) to 2-C-methyl-D-erythritol 4-phosphate (MEP). The polypeptide is 1-deoxy-D-xylulose 5-phosphate reductoisomerase (Burkholderia pseudomallei (strain 1106a)).